The following is a 155-amino-acid chain: MSNNIDVVEIYTDGACSGNPGPGGWAAVLLYKGTKKEISGFEENTTNNRMELKAVIEGLKALKRPCKVNLYSDSSYVINAFKEGWLEKWQKNNWLKSDKTPVENQDLWKELLEISKNHQVNWIKVKGHADNEYNNLCDRLATEQIKRNTRQNPKE.

One can recognise an RNase H type-1 domain in the interval 4–146; the sequence is NIDVVEIYTD…CDRLATEQIK (143 aa). Positions 13, 51, 73, and 138 each coordinate Mg(2+).

The protein belongs to the RNase H family. As to quaternary structure, monomer. Mg(2+) serves as cofactor.

The protein localises to the cytoplasm. The catalysed reaction is Endonucleolytic cleavage to 5'-phosphomonoester.. In terms of biological role, endonuclease that specifically degrades the RNA of RNA-DNA hybrids. This Thermoanaerobacter pseudethanolicus (strain ATCC 33223 / 39E) (Clostridium thermohydrosulfuricum) protein is Ribonuclease H.